Consider the following 371-residue polypeptide: Caytaxin (371 aa).

Residues 1–54 (MGTTEATLRMENVDVKEEWQDEDLPRPLPEETGVELLGSPVEDTSSPPNTLNFN) form a disordered region. A compositionally biased stretch (basic and acidic residues) spans 11 to 29 (ENVDVKEEWQDEDLPRPLP). Over residues 42 to 53 (EDTSSPPNTLNF) the composition is skewed to polar residues. The interval 115 to 120 (ELEWGD) is required for interaction with KLC1. The region spanning 171–328 (IRPYMKVVTH…CVLQYEEERL (158 aa)) is the CRAL-TRIO domain. Positions 190-371 (AIIVFAACFL…VTEDQETSMS (182 aa)) are mediates interaction with GLS. Residues 331–371 (RRESARPQPEFVMPRSEEKPEVAPVENRSAPVTEDQETSMS) are disordered.

As to quaternary structure, interacts with KLC1; may link mitochondria to KLC1 and regulate mitochondria localization into neuron projections. Interacts with GLS; the interaction is direct and may control GLS localization, negatively regulating its activity. Interacts with PIN1 (via WW domain); upon NGF stimulation. The interaction with PIN1 and GLS is competitive. Post-translationally, cleaved by CASP3 and CASP7. The potential C-terminal product released by CASP3 cleavage may inhibit the ERK signaling pathway through MAP2K2. May be ubiquitinated by STUB1.

It is found in the cell projection. Its subcellular location is the axon. It localises to the dendrite. The protein localises to the presynapse. The protein resides in the mitochondrion. It is found in the growth cone. Its subcellular location is the cytoplasm. Functions in the development of neural tissues, particularly the postnatal maturation of the cerebellar cortex. May play a role in neurotransmission through regulation of glutaminase/GLS, an enzyme responsible for the production in neurons of the glutamate neurotransmitter. Alternatively, may regulate the localization of mitochondria within axons and dendrites. This chain is Caytaxin (ATCAY), found in Macaca fascicularis (Crab-eating macaque).